Here is a 580-residue protein sequence, read N- to C-terminus: Acyl-coenzyme A synthetase ACSM3, mitochondrial (580 aa).

A mitochondrion-targeting transit peptide spans 1–21 (MAMLLRARCFHRLAIPDPRRI). Residues Lys-67 and Lys-100 each carry the N6-succinyllysine modification. At Lys-151 the chain carries N6-acetyllysine. Residues 229–237 (TSGTTGPPK), 368–373 (EGYGQT), Asp-455, Arg-470, and Lys-566 each bind ATP.

This sequence belongs to the ATP-dependent AMP-binding enzyme family. Requires Mg(2+) as cofactor. Mn(2+) serves as cofactor.

It localises to the mitochondrion. The protein resides in the mitochondrion matrix. It carries out the reaction a medium-chain fatty acid + ATP + CoA = a medium-chain fatty acyl-CoA + AMP + diphosphate. The enzyme catalyses propanoate + ATP + CoA = propanoyl-CoA + AMP + diphosphate. It catalyses the reaction butanoate + ATP + CoA = butanoyl-CoA + AMP + diphosphate. The catalysed reaction is 2-methylpropanoate + ATP + CoA = 2-methylpropanoyl-CoA + AMP + diphosphate. It carries out the reaction 2-methylbutanoate + ATP + CoA = 2-methylbutanoyl-CoA + AMP + diphosphate. The enzyme catalyses octanoate + ATP + CoA = octanoyl-CoA + AMP + diphosphate. Its function is as follows. Catalyzes the activation of fatty acids by CoA to produce an acyl-CoA, the first step in fatty acid metabolism. Capable of activating medium-chain fatty acids with a preference for isobutyrate among fatty acids with 2-6 carbon atoms. The polypeptide is Acyl-coenzyme A synthetase ACSM3, mitochondrial (Acsm3) (Rattus norvegicus (Rat)).